The chain runs to 311 residues: Putative HTH-type transcriptional regulatory protein MTH_967 (311 aa).

Positions 134-192 constitute an HTH cro/C1-type domain; it reads LREVREEYNLSLKDLADLAHVSRKTIYKYENGLARASAETAMILEEILNIRITLSIDIF. The H-T-H motif DNA-binding region spans 145 to 164; it reads LKDLADLAHVSRKTIYKYEN.

This chain is Putative HTH-type transcriptional regulatory protein MTH_967, found in Methanothermobacter thermautotrophicus (strain ATCC 29096 / DSM 1053 / JCM 10044 / NBRC 100330 / Delta H) (Methanobacterium thermoautotrophicum).